Consider the following 181-residue polypeptide: Adenylyl-sulfate kinase (181 aa).

20–27 (GLSGAGKS) serves as a coordination point for ATP. Serine 94 acts as the Phosphoserine intermediate in catalysis.

This sequence belongs to the APS kinase family.

The enzyme catalyses adenosine 5'-phosphosulfate + ATP = 3'-phosphoadenylyl sulfate + ADP + H(+). Its pathway is sulfur metabolism; hydrogen sulfide biosynthesis; sulfite from sulfate: step 2/3. Catalyzes the synthesis of activated sulfate. In Deinococcus geothermalis (strain DSM 11300 / CIP 105573 / AG-3a), this protein is Adenylyl-sulfate kinase.